Reading from the N-terminus, the 679-residue chain is Penicillin-binding protein 1A (679 aa).

Over residues 1-14 the composition is skewed to basic residues; that stretch reads MTERKREHKDRKQN. Residues 1–20 form a disordered region; sequence MTERKREHKDRKQNKNSPKN. The Cytoplasmic portion of the chain corresponds to 1-30; it reads MTERKREHKDRKQNKNSPKNQSKVTKFLKW. The chain crosses the membrane as a helical; Signal-anchor for type II membrane protein span at residues 31 to 51; it reads FFIGILLLGITAVTVVGIYVL. Residues 52–679 lie on the Extracellular side of the membrane; the sequence is SIIRSSPELD…QYKEVDNLVE (628 aa). The segment at 72 to 244 is transglycosylase; it reads SILYDDQGNF…PTSYDGLSEA (173 aa). Glutamate 111 serves as the catalytic Proton donor; for transglycosylase activity. Positions 378 to 663 are transpeptidase; the sequence is ASATIIDYKT…TSPIFGKIMG (286 aa). Residue serine 417 is the Acyl-ester intermediate; for transpeptidase activity of the active site.

The protein in the N-terminal section; belongs to the glycosyltransferase 51 family. In the C-terminal section; belongs to the transpeptidase family.

The protein resides in the cell membrane. It carries out the reaction [GlcNAc-(1-&gt;4)-Mur2Ac(oyl-L-Ala-gamma-D-Glu-L-Lys-D-Ala-D-Ala)](n)-di-trans,octa-cis-undecaprenyl diphosphate + beta-D-GlcNAc-(1-&gt;4)-Mur2Ac(oyl-L-Ala-gamma-D-Glu-L-Lys-D-Ala-D-Ala)-di-trans,octa-cis-undecaprenyl diphosphate = [GlcNAc-(1-&gt;4)-Mur2Ac(oyl-L-Ala-gamma-D-Glu-L-Lys-D-Ala-D-Ala)](n+1)-di-trans,octa-cis-undecaprenyl diphosphate + di-trans,octa-cis-undecaprenyl diphosphate + H(+). The catalysed reaction is Preferential cleavage: (Ac)2-L-Lys-D-Ala-|-D-Ala. Also transpeptidation of peptidyl-alanyl moieties that are N-acyl substituents of D-alanine.. Its pathway is cell wall biogenesis; peptidoglycan biosynthesis. Cell wall formation. Synthesis of cross-linked peptidoglycan from the lipid intermediates. The enzyme has a penicillin-insensitive transglycosylase N-terminal domain (formation of linear glycan strands) and a penicillin-sensitive transpeptidase C-terminal domain (cross-linking of the peptide subunits). This Clostridium perfringens (strain 13 / Type A) protein is Penicillin-binding protein 1A (pbpA).